Here is a 429-residue protein sequence, read N- to C-terminus: MKIEKITGREILDSRGNPTVEVDVVLESGIMGRASVPSGASTGEHEALELRDGDKHRYGGKGVQKAVENVNKVIAPHLIGMSALDQIGIDHAMLALDGTKTKAKLGANAILGVSLAVAKAAANYLDIPLYRYIGGTNTYVLPVPMMNIINGGSHSDAPIAFQEFMIRPVGASSFKEGLRMGAEVFHALKKVLKDRGLSTAVGDEGGFAPNLEGTEDALNSILAAIKAAGYEPGKDVMIGMDCASSEFYHDGIYDYTKFEGEKGKKRTADEQIDYLEKLINEYPIDSIEDGMSENDWEGWKKLTQRIGDRCQLVGDDLFVTNVDFLAKGIEKGCANSILIKVNQIGSLTETLNAIEMAHRHGYTTVTSHRSGETEDATIADIAVATNSGQIKTGSLSRSDRMAKYNQLLRIEEELGDRAVYGYKRIVVKG.

A (2R)-2-phosphoglycerate-binding site is contributed by Gln-162. Catalysis depends on Glu-204, which acts as the Proton donor. 3 residues coordinate Mg(2+): Asp-241, Glu-288, and Asp-315. Residues Lys-340, Arg-369, Ser-370, and Lys-391 each contribute to the (2R)-2-phosphoglycerate site. The Proton acceptor role is filled by Lys-340.

This sequence belongs to the enolase family. It depends on Mg(2+) as a cofactor.

It localises to the cytoplasm. The protein localises to the secreted. It is found in the cell surface. The catalysed reaction is (2R)-2-phosphoglycerate = phosphoenolpyruvate + H2O. It participates in carbohydrate degradation; glycolysis; pyruvate from D-glyceraldehyde 3-phosphate: step 4/5. Catalyzes the reversible conversion of 2-phosphoglycerate (2-PG) into phosphoenolpyruvate (PEP). It is essential for the degradation of carbohydrates via glycolysis. This chain is Enolase, found in Bacteroides fragilis (strain ATCC 25285 / DSM 2151 / CCUG 4856 / JCM 11019 / LMG 10263 / NCTC 9343 / Onslow / VPI 2553 / EN-2).